The sequence spans 409 residues: Elongation factor Tu (409 aa).

Positions 10–214 (KPHANIGTIG…EVDAYIPTPE (205 aa)) constitute a tr-type G domain. The tract at residues 19–26 (GHVDHGKT) is G1. 19 to 26 (GHVDHGKT) serves as a coordination point for GTP. T26 lines the Mg(2+) pocket. A G2 region spans residues 60–64 (GITIN). The interval 81 to 84 (DCPG) is G3. GTP is bound by residues 81 to 85 (DCPGH) and 136 to 139 (NKED). The interval 136–139 (NKED) is G4. The tract at residues 174-176 (SAL) is G5.

This sequence belongs to the TRAFAC class translation factor GTPase superfamily. Classic translation factor GTPase family. EF-Tu/EF-1A subfamily. In terms of assembly, monomer.

The protein localises to the cytoplasm. The enzyme catalyses GTP + H2O = GDP + phosphate + H(+). Functionally, GTP hydrolase that promotes the GTP-dependent binding of aminoacyl-tRNA to the A-site of ribosomes during protein biosynthesis. This is Elongation factor Tu from Synechococcus elongatus (strain ATCC 33912 / PCC 7942 / FACHB-805) (Anacystis nidulans R2).